We begin with the raw amino-acid sequence, 294 residues long: uncharacterized protein (294 aa).

This is an uncharacterized protein from Diadromus pulchellus idnoreovirus 1 (DpIRV-1).